The primary structure comprises 211 residues: Thiamine-phosphate synthase (211 aa).

4-amino-2-methyl-5-(diphosphooxymethyl)pyrimidine is bound by residues 37–41 and Asn-69; that span reads QLRIK. The Mg(2+) site is built by Asp-70 and Asp-89. Ser-108 lines the 4-amino-2-methyl-5-(diphosphooxymethyl)pyrimidine pocket. 134-136 is a binding site for 2-[(2R,5Z)-2-carboxy-4-methylthiazol-5(2H)-ylidene]ethyl phosphate; that stretch reads TQT. Lys-137 lines the 4-amino-2-methyl-5-(diphosphooxymethyl)pyrimidine pocket. 2-[(2R,5Z)-2-carboxy-4-methylthiazol-5(2H)-ylidene]ethyl phosphate contacts are provided by residues Gly-166 and 186-187; that span reads VS.

It belongs to the thiamine-phosphate synthase family. Requires Mg(2+) as cofactor.

It carries out the reaction 2-[(2R,5Z)-2-carboxy-4-methylthiazol-5(2H)-ylidene]ethyl phosphate + 4-amino-2-methyl-5-(diphosphooxymethyl)pyrimidine + 2 H(+) = thiamine phosphate + CO2 + diphosphate. The catalysed reaction is 2-(2-carboxy-4-methylthiazol-5-yl)ethyl phosphate + 4-amino-2-methyl-5-(diphosphooxymethyl)pyrimidine + 2 H(+) = thiamine phosphate + CO2 + diphosphate. It catalyses the reaction 4-methyl-5-(2-phosphooxyethyl)-thiazole + 4-amino-2-methyl-5-(diphosphooxymethyl)pyrimidine + H(+) = thiamine phosphate + diphosphate. It participates in cofactor biosynthesis; thiamine diphosphate biosynthesis; thiamine phosphate from 4-amino-2-methyl-5-diphosphomethylpyrimidine and 4-methyl-5-(2-phosphoethyl)-thiazole: step 1/1. Condenses 4-methyl-5-(beta-hydroxyethyl)thiazole monophosphate (THZ-P) and 2-methyl-4-amino-5-hydroxymethyl pyrimidine pyrophosphate (HMP-PP) to form thiamine monophosphate (TMP). The chain is Thiamine-phosphate synthase from Citrobacter koseri (strain ATCC BAA-895 / CDC 4225-83 / SGSC4696).